Consider the following 231-residue polypeptide: Large ribosomal subunit protein uL1 (231 aa).

Belongs to the universal ribosomal protein uL1 family. As to quaternary structure, part of the 50S ribosomal subunit.

Its function is as follows. Binds directly to 23S rRNA. The L1 stalk is quite mobile in the ribosome, and is involved in E site tRNA release. Protein L1 is also a translational repressor protein, it controls the translation of the L11 operon by binding to its mRNA. The sequence is that of Large ribosomal subunit protein uL1 from Staphylococcus carnosus (strain TM300).